Reading from the N-terminus, the 41-residue chain is Large ribosomal subunit protein bL36 (41 aa).

This sequence belongs to the bacterial ribosomal protein bL36 family.

In Sphingopyxis alaskensis (strain DSM 13593 / LMG 18877 / RB2256) (Sphingomonas alaskensis), this protein is Large ribosomal subunit protein bL36.